A 151-amino-acid chain; its full sequence is D-aminoacyl-tRNA deacylase (151 aa).

The Gly-cisPro motif, important for rejection of L-amino acids motif lies at 137-138 (GP).

It belongs to the DTD family. In terms of assembly, homodimer.

The protein localises to the cytoplasm. It catalyses the reaction glycyl-tRNA(Ala) + H2O = tRNA(Ala) + glycine + H(+). The enzyme catalyses a D-aminoacyl-tRNA + H2O = a tRNA + a D-alpha-amino acid + H(+). Functionally, an aminoacyl-tRNA editing enzyme that deacylates mischarged D-aminoacyl-tRNAs. Also deacylates mischarged glycyl-tRNA(Ala), protecting cells against glycine mischarging by AlaRS. Acts via tRNA-based rather than protein-based catalysis; rejects L-amino acids rather than detecting D-amino acids in the active site. By recycling D-aminoacyl-tRNA to D-amino acids and free tRNA molecules, this enzyme counteracts the toxicity associated with the formation of D-aminoacyl-tRNA entities in vivo and helps enforce protein L-homochirality. The protein is D-aminoacyl-tRNA deacylase of Listeria monocytogenes serotype 4a (strain HCC23).